The sequence spans 376 residues: Heme chaperone HemW (376 aa).

The Radical SAM core domain occupies 1-236 (MFKLPPISLY…LKQSGYKKYE (236 aa)). Position 10 (Tyr-10) interacts with S-adenosyl-L-methionine. Residues Cys-16, Cys-20, and Cys-23 each coordinate [4Fe-4S] cluster. S-adenosyl-L-methionine contacts are provided by residues Gly-66, 67–68 (GT), Glu-99, Gln-126, Arg-138, and Asp-162.

Belongs to the anaerobic coproporphyrinogen-III oxidase family. HemW subfamily. The cofactor is [4Fe-4S] cluster.

Its subcellular location is the cytoplasm. Its function is as follows. Probably acts as a heme chaperone, transferring heme to an unknown acceptor. Binds one molecule of heme per monomer, possibly covalently. Binds 1 [4Fe-4S] cluster. The cluster is coordinated with 3 cysteines and an exchangeable S-adenosyl-L-methionine. The sequence is that of Heme chaperone HemW from Buchnera aphidicola subsp. Schizaphis graminum (strain Sg).